The following is a 250-amino-acid chain: Acidic endochitinase (250 aa).

A Pyrrolidone carboxylic acid modification is found at Gln-1. Positions 1–36 constitute a Chitin-binding type-1 domain; that stretch reads QNCQCDTTIYCCSQHGYCGNSYDYCGPGCQAGPCWD. 7 disulfide bridges follow: Cys-3/Cys-12, Cys-5/Cys-18, Cys-11/Cys-25, Cys-29/Cys-34, Cys-66/Cys-115, Cys-128/Cys-136, and Cys-218/Cys-250. The active-site Proton donor is the Glu-110.

The protein belongs to the glycosyl hydrolase 19 family. Chitinase class I subfamily.

It catalyses the reaction Random endo-hydrolysis of N-acetyl-beta-D-glucosaminide (1-&gt;4)-beta-linkages in chitin and chitodextrins.. Its function is as follows. Defense against chitin-containing fungal pathogens. In Dioscorea japonica (Japanese yam), this protein is Acidic endochitinase.